The following is a 1072-amino-acid chain: DNA-directed RNA polymerase subunit beta (1072 aa).

Belongs to the RNA polymerase beta chain family. In terms of assembly, in plastids the minimal PEP RNA polymerase catalytic core is composed of four subunits: alpha, beta, beta', and beta''. When a (nuclear-encoded) sigma factor is associated with the core the holoenzyme is formed, which can initiate transcription.

It is found in the plastid. It localises to the chloroplast. It carries out the reaction RNA(n) + a ribonucleoside 5'-triphosphate = RNA(n+1) + diphosphate. In terms of biological role, DNA-dependent RNA polymerase catalyzes the transcription of DNA into RNA using the four ribonucleoside triphosphates as substrates. The polypeptide is DNA-directed RNA polymerase subunit beta (Eucalyptus globulus subsp. globulus (Tasmanian blue gum)).